Reading from the N-terminus, the 1218-residue chain is Coatomer subunit alpha-1 (1218 aa).

WD repeat units follow at residues 7–48, 49–88, 91–132, 133–172, 202–241, 246–285, 288–326, 363–404, and 450–489; these read TKSN…DRFD, EHDG…CLFT, GHLD…AVLT, GHNH…KKTV, GHDR…AWEV, GHMN…GIQT, REHD…PAFS, SLNQ…AGRA, and PLPI…GELQ. A disordered region spans residues 857 to 882; that stretch reads NGGDGFDAEEGEANEEDGEEGGWDLE. The segment covering 862-882 has biased composition (acidic residues); sequence FDAEEGEANEEDGEEGGWDLE.

In terms of assembly, oligomeric complex that consists of at least the alpha, beta, beta', gamma, delta, epsilon and zeta subunits.

It localises to the cytoplasm. The protein localises to the golgi apparatus membrane. The protein resides in the cytoplasmic vesicle. It is found in the COPI-coated vesicle membrane. Functionally, the coatomer is a cytosolic protein complex that binds to dilysine motifs and reversibly associates with Golgi non-clathrin-coated vesicles, which further mediate biosynthetic protein transport from the ER, via the Golgi up to the trans Golgi network. Coatomer complex is required for budding from Golgi membranes, and is essential for the retrograde Golgi-to-ER transport of dilysine-tagged proteins. This is Coatomer subunit alpha-1 from Oryza sativa subsp. japonica (Rice).